The sequence spans 113 residues: MNMEATAILRGARISPQKARLVAAQVRGLSAESAVNLLRFSSKKAACLIKKVVESAIANAENNHGSNIDDLKINTIIVDEGRMLKRFMARAKGRSSRIVKRSSHITVVVGPAK.

Belongs to the universal ribosomal protein uL22 family. As to quaternary structure, part of the 50S ribosomal subunit.

Functionally, this protein binds specifically to 23S rRNA; its binding is stimulated by other ribosomal proteins, e.g. L4, L17, and L20. It is important during the early stages of 50S assembly. It makes multiple contacts with different domains of the 23S rRNA in the assembled 50S subunit and ribosome. The globular domain of the protein is located near the polypeptide exit tunnel on the outside of the subunit, while an extended beta-hairpin is found that lines the wall of the exit tunnel in the center of the 70S ribosome. The polypeptide is Large ribosomal subunit protein uL22 (Xylella fastidiosa (strain M12)).